The sequence spans 198 residues: Iron-sulfur flavoprotein MJ0731 (198 aa).

Cys-46, Cys-49, Cys-52, and Cys-59 together coordinate [4Fe-4S] cluster.

The protein belongs to the SsuE family. Isf subfamily. As to quaternary structure, homodimer. FMN is required as a cofactor. Requires [4Fe-4S] cluster as cofactor.

Redox-active protein probably involved in electron transport. The protein is Iron-sulfur flavoprotein MJ0731 of Methanocaldococcus jannaschii (strain ATCC 43067 / DSM 2661 / JAL-1 / JCM 10045 / NBRC 100440) (Methanococcus jannaschii).